The primary structure comprises 829 residues: Protein roadkill (829 aa).

3 stretches are compositionally biased toward low complexity: residues 24–36 (EQQQ…QQQQ), 122–140 (TPAA…QAAP), and 266–288 (SSSS…SSSS). Disordered stretches follow at residues 24–47 (EQQQ…CCEN), 106–142 (SSLQ…APSV), 266–296 (SSSS…SHHS), and 313–400 (HLNQ…NQQQ). A compositionally biased stretch (basic residues) spans 313–322 (HLNQQQHHHP). Low complexity-rich tracts occupy residues 323 to 353 (LSAS…QQQH), 372 to 382 (SSSSSSSSSSS), and 389 to 400 (SSSSSNSNNQQQ). Residues 486-616 (KFSYMWTINN…EDKLTIFCEV (131 aa)) form the MATH domain. The region spanning 655 to 722 (SDVTLSVGGR…IYTGKAPNLE (68 aa)) is the BTB domain.

The protein belongs to the Tdpoz family. Interacts with ci and gft/CUL3. As to expression, expressed near the anterio-posterior compartment boundary of antenna, leg and wing disks.

Its subcellular location is the nucleus. It participates in protein modification; protein ubiquitination. Involved in segment polarity. In complex with gft/CUL3, promotes ubiquitination of ci and its subsequent degradation by the proteasome, which results in hh signaling attenuation. This regulation may be important during eye formation for proper packing of ommatidia into a hexagonal array. This is Protein roadkill (rdx) from Drosophila melanogaster (Fruit fly).